The chain runs to 268 residues: MPHGFDKLLHPEPEPQSPSPPPPPRRPSTQSRYHLHIRQQPIAARACGAGDRDRRPVDPPPIVQILLTDFDSNSQEDRDLLQDPRFTVGYRDGNRDREREREHERERERERETDGVARTDDNFSTPLLSGKAFMSPFYVDADPDPNSAPAHPSSISDPHISNPPHHVYNHAASRLHQPATFFIFADLSIRSAGLYRLQFRLMNWGSVEDTGQSMPILAQAWSDPFRVYPAKDFPGMRDSSILAEGLKELGFVELKTRGHGKGKGKKRR.

Over residues 1 to 13 (MPHGFDKLLHPEP) the composition is skewed to basic and acidic residues. 2 disordered regions span residues 1-124 (MPHG…DNFS) and 142-165 (DPDP…NPPH). Residues 14–26 (EPQSPSPPPPPRR) show a composition bias toward pro residues. The Velvet domain occupies 28–257 (STQSRYHLHI…ELGFVELKTR (230 aa)). The span at 92 to 121 (DGNRDREREREHERERERERETDGVARTDD) shows a compositional bias: basic and acidic residues.

The protein belongs to the velvet family. VelC subfamily. Interacts with velA and vosA.

It localises to the nucleus. Velvet-domain-containing protein that acts as a positive regulator of sexual development. In Penicillium rubens (strain ATCC 28089 / DSM 1075 / NRRL 1951 / Wisconsin 54-1255) (Penicillium chrysogenum), this protein is Sexual development regulator velC.